Reading from the N-terminus, the 216-residue chain is Small ribosomal subunit protein uS2 (216 aa).

This sequence belongs to the universal ribosomal protein uS2 family.

This chain is Small ribosomal subunit protein uS2, found in Carsonella ruddii (strain PV).